The primary structure comprises 397 residues: Cystinosin (397 aa).

A signal peptide spans 1–24 (MDFSTHRLTTLLLLLLATVALGNA). The Lumenal portion of the chain corresponds to 25 to 126 (QSSQLTVDSH…FVRVTVAKSR (102 aa)). Residues Asn-43 and Asn-86 are each glycosylated (N-linked (GlcNAc...) asparagine). Residues 127–147 (ALIYTSIIFGWVYFVAWSVSF) form a helical membrane-spanning segment. In terms of domain architecture, PQ-loop 1 spans 132–187 (SIIFGWVYFVAWSVSFYPQIWSNYRRKSVEGLNFDFLALNIVGFTLYSMFNCGLYF). At 148–167 (YPQIWSNYRRKSVEGLNFDF) the chain is on the cytoplasmic side. Residues 168 to 188 (LALNIVGFTLYSMFNCGLYFI) form a helical membrane-spanning segment. Residues 189 to 210 (EDLQNEYEVRYPLGVNPVMLND) lie on the Lumenal side of the membrane. A helical membrane pass occupies residues 211–231 (VVFSLHAMFATCITILQCFFY). Residues 232–239 (QRAQQRVS) lie on the Cytoplasmic side of the membrane. The helical transmembrane segment at 240–260 (FIAYGILAIFAVVVVVSAGLA) threads the bilayer. At 261–263 (GGS) the chain is on the lumenal side. Residues 264–284 (VIHWLDFLYYCSYVKLTITII) form a helical membrane-spanning segment. The region spanning 271-327 (LYYCSYVKLTITIIKYVPQALMNYRRKSTSGWSIGNILLDFTGGTLSMLQMILNAHN) is the PQ-loop 2 domain. The Cytoplasmic segment spans residues 285-302 (KYVPQALMNYRRKSTSGW). A helical membrane pass occupies residues 303–323 (SIGNILLDFTGGTLSMLQMIL). The Lumenal segment spans residues 324-340 (NAHNYDDWVSIFGDPTK). The helical transmembrane segment at 341–361 (FGLGLFSVLFDVFFMLQHYVF) threads the bilayer. The Cytoplasmic portion of the chain corresponds to 362 to 397 (YRHSRESSSSDLTTVTDVQNRTNESPPPSEVTTEKY). Polar residues predominate over residues 373–385 (LTTVTDVQNRTNE). The disordered stretch occupies residues 373–397 (LTTVTDVQNRTNESPPPSEVTTEKY).

The protein belongs to the cystinosin family.

Its subcellular location is the lysosome membrane. The enzyme catalyses L-cystine(out) + H(+)(out) = L-cystine(in) + H(+)(in). Cystine/H(+) symporter that mediates export of cystine, the oxidized dimer of cysteine, from lysosomes. Involved in cysteine homeostasis during periods of fasting, which indirectly regulates mTORC1-mediated signaling by supporting de novo CoA synthesis, the TCA cycle and amino acid metabolism during periods of food shortage. Important for maintaining autophagy, and for development and survival during periods of fasting. The polypeptide is Cystinosin (Drosophila melanogaster (Fruit fly)).